We begin with the raw amino-acid sequence, 1090 residues long: Pullulanase (1090 aa).

The signal sequence occupies residues 1-19; that stretch reads MLRYTRNALVLGSLVLLSG. Cysteine 20 carries N-palmitoyl cysteine lipidation. Cysteine 20 carries the S-diacylglycerol cysteine lipid modification. The active-site Nucleophile is the aspartate 684. Glutamate 713 functions as the Proton donor in the catalytic mechanism.

This sequence belongs to the glycosyl hydrolase 13 family. In terms of assembly, homotrimer.

It localises to the cell membrane. It catalyses the reaction Hydrolysis of (1-&gt;6)-alpha-D-glucosidic linkages in pullulan, amylopectin and glycogen, and in the alpha- and beta-limit dextrins of amylopectin and glycogen.. This Klebsiella pneumoniae protein is Pullulanase (pulA).